The primary structure comprises 407 residues: Chorismate synthase (407 aa).

NADP(+)-binding residues include Arg40 and Arg46. FMN is bound by residues 138 to 140 (RAS) and 259 to 260 (QA). Basic and acidic residues predominate over residues 275–284 (RRGSRAHDEM). A disordered region spans residues 275–308 (RRGSRAHDEMYPGTDGVVRSTNRAGGLEGGMTNG). Residues Gly303, 318 to 322 (KPIST), and Arg344 each bind FMN.

The protein belongs to the chorismate synthase family. Homotetramer. FMNH2 serves as cofactor.

The enzyme catalyses 5-O-(1-carboxyvinyl)-3-phosphoshikimate = chorismate + phosphate. It functions in the pathway metabolic intermediate biosynthesis; chorismate biosynthesis; chorismate from D-erythrose 4-phosphate and phosphoenolpyruvate: step 7/7. In terms of biological role, catalyzes the anti-1,4-elimination of the C-3 phosphate and the C-6 proR hydrogen from 5-enolpyruvylshikimate-3-phosphate (EPSP) to yield chorismate, which is the branch point compound that serves as the starting substrate for the three terminal pathways of aromatic amino acid biosynthesis. This reaction introduces a second double bond into the aromatic ring system. The sequence is that of Chorismate synthase from Mycobacterium marinum (strain ATCC BAA-535 / M).